Here is a 79-residue protein sequence, read N- to C-terminus: Conotoxin LiCr173 (79 aa).

An N-terminal signal peptide occupies residues 1-20 (MSGLGTMVLTLLLLVFMVTS). Positions 21–46 (HQDGGKKQATQRNAVNIRRRKSITQR) are excised as a propeptide. 3 disulfide bridges follow: Cys52/Cys64, Cys56/Cys73, and Cys63/Cys77. At Phe78 the chain carries Phenylalanine amide.

Belongs to the conotoxin O3 superfamily. Expressed by the venom duct.

Its subcellular location is the secreted. The chain is Conotoxin LiCr173 from Conus lividus (Livid cone).